The chain runs to 363 residues: 24-methylenesterol C-methyltransferase 2 (363 aa).

A helical membrane pass occupies residues 6–26 (MAWTAAGVGMALVYWFVWVMG).

It belongs to the class I-like SAM-binding methyltransferase superfamily. Erg6/SMT family.

The protein resides in the membrane. It carries out the reaction 24-methylidenelophenol + S-adenosyl-L-methionine = (Z)-24-ethylidenelophenol + S-adenosyl-L-homocysteine + H(+). Its pathway is steroid biosynthesis; sterol biosynthesis. Catalyzes the methyl transfer from S-adenosyl-methionine to the methylene group of 24-methylene lophenol to form 24-ethylidene lophenol. This Oryza sativa subsp. japonica (Rice) protein is 24-methylenesterol C-methyltransferase 2 (Smt2-1).